Here is a 701-residue protein sequence, read N- to C-terminus: Polyribonucleotide nucleotidyltransferase (701 aa).

Mg(2+) contacts are provided by D490 and D496. Residues P557–I616 form the KH domain. The 69-residue stretch at G626–R694 folds into the S1 motif domain.

This sequence belongs to the polyribonucleotide nucleotidyltransferase family. Requires Mg(2+) as cofactor.

The protein localises to the cytoplasm. The enzyme catalyses RNA(n+1) + phosphate = RNA(n) + a ribonucleoside 5'-diphosphate. Involved in mRNA degradation. Catalyzes the phosphorolysis of single-stranded polyribonucleotides processively in the 3'- to 5'-direction. This is Polyribonucleotide nucleotidyltransferase from Staphylococcus carnosus (strain TM300).